Consider the following 89-residue polypeptide: Small ribosomal subunit protein uS17 (89 aa).

This sequence belongs to the universal ribosomal protein uS17 family. In terms of assembly, part of the 30S ribosomal subunit.

One of the primary rRNA binding proteins, it binds specifically to the 5'-end of 16S ribosomal RNA. The polypeptide is Small ribosomal subunit protein uS17 (Xylella fastidiosa (strain 9a5c)).